Reading from the N-terminus, the 613-residue chain is Dihydroxy-acid dehydratase (613 aa).

D81 contacts Mg(2+). C122 contributes to the [2Fe-2S] cluster binding site. Residues D123 and K124 each contribute to the Mg(2+) site. Residue K124 is modified to N6-carboxylysine. Position 195 (C195) interacts with [2Fe-2S] cluster. Residue E491 participates in Mg(2+) binding. Residue S517 is the Proton acceptor of the active site.

It belongs to the IlvD/Edd family. Homodimer. It depends on [2Fe-2S] cluster as a cofactor. Mg(2+) serves as cofactor.

The enzyme catalyses (2R)-2,3-dihydroxy-3-methylbutanoate = 3-methyl-2-oxobutanoate + H2O. It carries out the reaction (2R,3R)-2,3-dihydroxy-3-methylpentanoate = (S)-3-methyl-2-oxopentanoate + H2O. Its pathway is amino-acid biosynthesis; L-isoleucine biosynthesis; L-isoleucine from 2-oxobutanoate: step 3/4. It participates in amino-acid biosynthesis; L-valine biosynthesis; L-valine from pyruvate: step 3/4. In terms of biological role, functions in the biosynthesis of branched-chain amino acids. Catalyzes the dehydration of (2R,3R)-2,3-dihydroxy-3-methylpentanoate (2,3-dihydroxy-3-methylvalerate) into 2-oxo-3-methylpentanoate (2-oxo-3-methylvalerate) and of (2R)-2,3-dihydroxy-3-methylbutanoate (2,3-dihydroxyisovalerate) into 2-oxo-3-methylbutanoate (2-oxoisovalerate), the penultimate precursor to L-isoleucine and L-valine, respectively. The protein is Dihydroxy-acid dehydratase of Photobacterium profundum (strain SS9).